Consider the following 222-residue polypeptide: Cytidylate kinase (222 aa).

7–15 (GPAGAGKST) serves as a coordination point for ATP.

Belongs to the cytidylate kinase family. Type 1 subfamily.

The protein localises to the cytoplasm. The catalysed reaction is CMP + ATP = CDP + ADP. It carries out the reaction dCMP + ATP = dCDP + ADP. This chain is Cytidylate kinase, found in Carboxydothermus hydrogenoformans (strain ATCC BAA-161 / DSM 6008 / Z-2901).